A 226-amino-acid chain; its full sequence is N-(5'-phosphoribosyl)anthranilate isomerase (226 aa).

Belongs to the TrpF family.

It carries out the reaction N-(5-phospho-beta-D-ribosyl)anthranilate = 1-(2-carboxyphenylamino)-1-deoxy-D-ribulose 5-phosphate. Its pathway is amino-acid biosynthesis; L-tryptophan biosynthesis; L-tryptophan from chorismate: step 3/5. This Methanothermobacter marburgensis (strain ATCC BAA-927 / DSM 2133 / JCM 14651 / NBRC 100331 / OCM 82 / Marburg) (Methanobacterium thermoautotrophicum) protein is N-(5'-phosphoribosyl)anthranilate isomerase (trpF).